Reading from the N-terminus, the 233-residue chain is MARAMHTVWIALVPTLFVFLQGINVKAATFDITNQCPYTVWAAASPGGGRQLAKGQTWTIQVPAGTTGGRVWARTGCSFDRSGRGTCQTGDCNGMLSCQGYGQVPATLAEYALNQYMNLDFYDISLVDGFNVPISMTPTSTNPNCKGRITCLSDINSKCPSELKVNGGCKSACARYNTAQYCCTGASANNCGPTNYSKFFKGQCPQAYSYAKDDATSTFTCPSGTNYKVVFCG.

Positions 1–22 (MARAMHTVWIALVPTLFVFLQG) are cleaved as a signal peptide. 8 cysteine pairs are disulfide-bonded: C36–C232, C77–C87, C92–C98, C145–C221, C151–C204, C159–C169, C173–C182, and C183–C191. An N-linked (GlcNAc...) asparagine glycan is attached at N195.

This sequence belongs to the thaumatin family. Strongly expressed in roots and in female and male strobili, and, to a lower extent, in cotyledons, leaves, stems and pollen grains.

May be involved in disease resistance. In Cryptomeria japonica (Japanese cedar), this protein is Pathogenesis-related thaumatin-like protein 3.2.